The sequence spans 216 residues: MSKVSPANIRSSVETILKGSEEKKRNFTETVELQIGLKNYDPQRDKRFSGTIKLPNVPRPNMSICILGDAHDLDRAKHGGVDAMSVDDLKKLNKNKKLVKKLAKKYDAFIASEVLIKQIPRLLGPGLSKAGKFPSPVSHSDDLYGKIIEVKSTIKFQLKKVLCLGVAVGHVDMAEEQLAANLSLAINFLVSLLKKGWQNIGSLVIKSTMGKPYRLY.

A phosphoserine mark is found at Ser-85 and Ser-128.

The protein belongs to the universal ribosomal protein uL1 family. In terms of assembly, component of the large ribosomal subunit (LSU). Mature yeast ribosomes consist of a small (40S) and a large (60S) subunit. The 40S small subunit contains 1 molecule of ribosomal RNA (18S rRNA) and at least 33 different proteins. The large 60S subunit contains 3 rRNA molecules (25S, 5.8S and 5S rRNA) and at least 46 different proteins. uL1 forms part of the L1 stalk.

It localises to the cytoplasm. Component of the ribosome, a large ribonucleoprotein complex responsible for the synthesis of proteins in the cell. The small ribosomal subunit (SSU) binds messenger RNAs (mRNAs) and translates the encoded message by selecting cognate aminoacyl-transfer RNA (tRNA) molecules. The large subunit (LSU) contains the ribosomal catalytic site termed the peptidyl transferase center (PTC), which catalyzes the formation of peptide bonds, thereby polymerizing the amino acids delivered by tRNAs into a polypeptide chain. The nascent polypeptides leave the ribosome through a tunnel in the LSU and interact with protein factors that function in enzymatic processing, targeting, and the membrane insertion of nascent chains at the exit of the ribosomal tunnel. uL1 forms part of the L1 stalk, a mobile element that plays a role in evacuating the exit-site tRNA. The protein is Large ribosomal subunit protein uL1A (rpl102) of Schizosaccharomyces pombe (strain 972 / ATCC 24843) (Fission yeast).